The primary structure comprises 626 residues: Interferon-induced GTP-binding protein MxC (626 aa).

Residues Asp40–Pro313 form the Dynamin-type G domain. Positions Gly50–Ser57 are G1 motif. Gly50 to Ser57 contacts GTP. The tract at residues Val75–Arg77 is G2 motif. The tract at residues Asp151 to Gly154 is G3 motif. GTP is bound by residues Asp151–Ile155 and Thr220–Asp223. The G4 motif stretch occupies residues Thr220–Asp223. Residues Lys252–Gly255 form a G5 motif region. The GED domain occupies Leu534–Asn624.

It belongs to the TRAFAC class dynamin-like GTPase superfamily. Dynamin/Fzo/YdjA family.

The protein resides in the cytoplasm. This Danio rerio (Zebrafish) protein is Interferon-induced GTP-binding protein MxC (mxc).